The chain runs to 204 residues: Methylthioribulose-1-phosphate dehydratase (204 aa).

Zn(2+) contacts are provided by H94 and H96.

This sequence belongs to the aldolase class II family. MtnB subfamily. Zn(2+) is required as a cofactor.

The catalysed reaction is 5-(methylsulfanyl)-D-ribulose 1-phosphate = 5-methylsulfanyl-2,3-dioxopentyl phosphate + H2O. The protein operates within amino-acid biosynthesis; L-methionine biosynthesis via salvage pathway; L-methionine from S-methyl-5-thio-alpha-D-ribose 1-phosphate: step 2/6. In terms of biological role, catalyzes the dehydration of methylthioribulose-1-phosphate (MTRu-1-P) into 2,3-diketo-5-methylthiopentyl-1-phosphate (DK-MTP-1-P). In Pseudomonas syringae pv. syringae (strain B728a), this protein is Methylthioribulose-1-phosphate dehydratase.